We begin with the raw amino-acid sequence, 331 residues long: MGFGDFDEICKKAALPLCSLVGPSSAISGSTGIIPNCYARNIELANTIIFEGAASFLHIIALGMTVIMILHIRSKFTAVGRKEIITFFYIYMALTVCSLVIDAGVVPPRSGPFPWFVAVQNGLTSALCTSLLVNGFVGFQLYEDGTALSVWLLRLTSTVMFAVSFLISILTFKSWGGLSPTNTLAMFIVLYIINAICIAVYLVMQLLLVLNTLEDRWPLGHIAFGLLVFIAGQVIMYAFGDVICDNVQHYLDGLFFATFCNLLAVMMVYKFWDYITKEDLEFSVGIKPNNWEIKELLPDEDRRTTVYQDTNSEYAGSMYHHRASTYNGHGY.

7 consecutive transmembrane segments (helical) span residues 52 to 72, 84 to 104, 113 to 133, 150 to 170, 184 to 204, 219 to 239, and 249 to 269; these read GAAS…ILHI, IITF…IDAG, FPWF…SLLV, VWLL…ISIL, LAMF…YLVM, LGHI…MYAF, and HYLD…MMVY.

It belongs to the CHS7 family. Interacts with chs3.

The protein localises to the endoplasmic reticulum membrane. In terms of biological role, chaperone required for the export of the chitin synthase chs3 from the endoplasmic reticulum. The chain is Chitin synthase export chaperone (chs7) from Emericella nidulans (strain FGSC A4 / ATCC 38163 / CBS 112.46 / NRRL 194 / M139) (Aspergillus nidulans).